The sequence spans 307 residues: MRILLAEPRGFCAGVDRAIAIVLKALEKFGPPIYVRHEIVHNRWVVEHLRNQGAVFVHELDEIPDGAVAIYSAHGVSKAVQAEGERRPLHILDATCPLVDKVHREAERLDHDHYQVLLIGHAGHPEVEGTMGQLQQARMKLISHPDDVAQLRLSNPQKVAYITQTTLSVDETRAMVAQLKARFPTIKEPAKEDICYATQNRQNAVKALAQASDLILVLGAPNSSNSNRLREVAEQHGCRAFLIENAKDVEIQWLEGVETLGITAGASAPEILVEELLAHLHAEQHQVELLSVTKEYLAFPLPLELRE.

Position 12 (Cys12) interacts with [4Fe-4S] cluster. (2E)-4-hydroxy-3-methylbut-2-enyl diphosphate-binding residues include His41 and His74. Positions 41 and 74 each coordinate dimethylallyl diphosphate. Residues His41 and His74 each coordinate isopentenyl diphosphate. Position 96 (Cys96) interacts with [4Fe-4S] cluster. His124 serves as a coordination point for (2E)-4-hydroxy-3-methylbut-2-enyl diphosphate. Position 124 (His124) interacts with dimethylallyl diphosphate. His124 provides a ligand contact to isopentenyl diphosphate. The active-site Proton donor is the Glu126. Residue Thr165 participates in (2E)-4-hydroxy-3-methylbut-2-enyl diphosphate binding. Cys195 contacts [4Fe-4S] cluster. (2E)-4-hydroxy-3-methylbut-2-enyl diphosphate contacts are provided by Ser223, Ser224, Asn225, and Ser267. Dimethylallyl diphosphate is bound by residues Ser223, Ser224, Asn225, and Ser267. Isopentenyl diphosphate is bound by residues Ser223, Ser224, Asn225, and Ser267.

Belongs to the IspH family. [4Fe-4S] cluster is required as a cofactor.

It catalyses the reaction isopentenyl diphosphate + 2 oxidized [2Fe-2S]-[ferredoxin] + H2O = (2E)-4-hydroxy-3-methylbut-2-enyl diphosphate + 2 reduced [2Fe-2S]-[ferredoxin] + 2 H(+). It carries out the reaction dimethylallyl diphosphate + 2 oxidized [2Fe-2S]-[ferredoxin] + H2O = (2E)-4-hydroxy-3-methylbut-2-enyl diphosphate + 2 reduced [2Fe-2S]-[ferredoxin] + 2 H(+). It participates in isoprenoid biosynthesis; dimethylallyl diphosphate biosynthesis; dimethylallyl diphosphate from (2E)-4-hydroxy-3-methylbutenyl diphosphate: step 1/1. The protein operates within isoprenoid biosynthesis; isopentenyl diphosphate biosynthesis via DXP pathway; isopentenyl diphosphate from 1-deoxy-D-xylulose 5-phosphate: step 6/6. Functionally, catalyzes the conversion of 1-hydroxy-2-methyl-2-(E)-butenyl 4-diphosphate (HMBPP) into a mixture of isopentenyl diphosphate (IPP) and dimethylallyl diphosphate (DMAPP). Acts in the terminal step of the DOXP/MEP pathway for isoprenoid precursor biosynthesis. The polypeptide is 4-hydroxy-3-methylbut-2-enyl diphosphate reductase (Magnetococcus marinus (strain ATCC BAA-1437 / JCM 17883 / MC-1)).